Reading from the N-terminus, the 83-residue chain is uncharacterized protein (83 aa).

Belongs to the chlamydial CPn_0711/CT_665/TC_0036 family.

This is an uncharacterized protein from Chlamydia trachomatis serovar D (strain ATCC VR-885 / DSM 19411 / UW-3/Cx).